The sequence spans 602 residues: DEAD-box ATP-dependent RNA helicase 53 (602 aa).

The segment covering 33–43 (ASPLDPCRGPA) has biased composition (low complexity). The interval 33-76 (ASPLDPCRGPAAPEPPRRRAFHGSPSPLGFRSTPASWSSPEAGA) is disordered. Positions 84–112 (LEVARLGISPWIVERLAARGITRLFPIQR) match the Q motif motif. A Helicase ATP-binding domain is found at 115-288 (LDPAMQGKDM…SKYLKDPIII (174 aa)). 128–135 (ARTGTGKT) contacts ATP. A DEAD box motif is present at residues 236–239 (DEAD). In terms of domain architecture, Helicase C-terminal spans 317-462 (ILGPLIKEHA…LPKIEVADEA (146 aa)). The tract at residues 503-602 (FGDFDGFGSS…GRSGGFDDSN (100 aa)) is disordered.

Belongs to the DEAD box helicase family. DDX21/DDX50 subfamily.

The enzyme catalyses ATP + H2O = ADP + phosphate + H(+). In Oryza sativa subsp. japonica (Rice), this protein is DEAD-box ATP-dependent RNA helicase 53.